A 64-amino-acid chain; its full sequence is Beta-defensin 1 (64 aa).

An N-terminal signal peptide occupies residues 1–22; that stretch reads MRLHHLLLVLFFVVLSAGSGFT. 3 disulfide bridges follow: C31/C60, C38/C53, and C43/C61.

This sequence belongs to the beta-defensin family. As to quaternary structure, monomer. Homodimer.

The protein resides in the secreted. The protein localises to the membrane. In terms of biological role, has bactericidal activity. May act as a ligand for C-C chemokine receptor CCR6. Positively regulates the sperm motility and bactericidal activity in a CCR6-dependent manner. Binds to CCR6 and triggers Ca2+ mobilization in the sperm which is important for its motility. The sequence is that of Beta-defensin 1 (DEFB1) from Ovis aries (Sheep).